Here is a 129-residue protein sequence, read N- to C-terminus: M-zodatoxin-Lt8g (129 aa).

The signal sequence occupies residues 1 to 20 (MKYFVVALALVAAFACIAES). Residues 21 to 60 (KPAESEHELAEVEEENELADLEDAVWLEHLADLSDLEEAR) constitute a propeptide that is removed on maturation. Positions 57–60 (EEAR) match the Processing quadruplet motif motif.

Post-translationally, cleavage of the propeptide depends on the processing quadruplet motif (XXXR, with at least one of X being E). In terms of tissue distribution, expressed by the venom gland.

Its subcellular location is the secreted. Insecticidal, cytolytic and antimicrobial peptide. Has insecticidal activity against the flesh fly S.carnaria. Has antibacterial activity against the Gram-negative bacteria E.coli. Forms voltage-dependent, ion-permeable channels in membranes. At high concentration causes cell membrane lysis. The protein is M-zodatoxin-Lt8g (cit 1-8) of Lachesana tarabaevi (Spider).